Reading from the N-terminus, the 72-residue chain is Large ribosomal subunit protein bL31 (72 aa).

Cysteine 16, cysteine 18, cysteine 38, and cysteine 41 together coordinate Zn(2+).

The protein belongs to the bacterial ribosomal protein bL31 family. Type A subfamily. As to quaternary structure, part of the 50S ribosomal subunit. Requires Zn(2+) as cofactor.

Binds the 23S rRNA. The sequence is that of Large ribosomal subunit protein bL31 from Beutenbergia cavernae (strain ATCC BAA-8 / DSM 12333 / CCUG 43141 / JCM 11478 / NBRC 16432 / NCIMB 13614 / HKI 0122).